A 373-amino-acid chain; its full sequence is D-alanine--D-alanine ligase A (373 aa).

One can recognise an ATP-grasp domain in the interval 146 to 355; the sequence is KRLAEFAGIP…YGELLSRLVD (210 aa). 179 to 234 contacts ATP; it reads VEGLSLPVFVKPCNMGSSVGIHKVKTQDALEAALDDAFRYDVKVLVQQGIDAREIE. Asp-308, Glu-322, and Asn-324 together coordinate Mg(2+).

Belongs to the D-alanine--D-alanine ligase family. The cofactor is Mg(2+). Mn(2+) serves as cofactor.

It is found in the cytoplasm. The catalysed reaction is 2 D-alanine + ATP = D-alanyl-D-alanine + ADP + phosphate + H(+). It functions in the pathway cell wall biogenesis; peptidoglycan biosynthesis. Functionally, cell wall formation. In Bradyrhizobium diazoefficiens (strain JCM 10833 / BCRC 13528 / IAM 13628 / NBRC 14792 / USDA 110), this protein is D-alanine--D-alanine ligase A.